A 360-amino-acid chain; its full sequence is sn-glycerol-3-phosphate import ATP-binding protein UgpC (360 aa).

An ABC transporter domain is found at 4 to 235 (LSLKGVKKSY…PATTFVASFI (232 aa)). 37–44 (GPSGCGKS) is an ATP binding site.

The protein belongs to the ABC transporter superfamily. sn-glycerol-3-phosphate importer (TC 3.A.1.1.3) family. In terms of assembly, the complex is composed of two ATP-binding proteins (UgpC), two transmembrane proteins (UgpA and UgpE) and a solute-binding protein (UgpB).

It is found in the cell inner membrane. The enzyme catalyses sn-glycerol 3-phosphate(out) + ATP + H2O = sn-glycerol 3-phosphate(in) + ADP + phosphate + H(+). Part of the ABC transporter complex UgpBAEC involved in sn-glycerol-3-phosphate (G3P) import. Responsible for energy coupling to the transport system. This Burkholderia mallei (strain ATCC 23344) protein is sn-glycerol-3-phosphate import ATP-binding protein UgpC.